The sequence spans 483 residues: Essential nuclear protein 1 (483 aa).

4 disordered regions span residues 1–21 (MARASSTKARKQRHDPLLKDL), 33–55 (KKKLAQNDAANHDAANEEDGYID), 67–123 (KEQQ…EGDY), and 171–200 (ESQVEDMQDDEPLANEQNTSRGNISSGLKS). A compositionally biased stretch (acidic residues) spans 96-123 (YDDEDEDEDEDEEAFGEDISDFEPEGDY). The residue at position 172 (serine 172) is a Phosphoserine; by ATM or ATR. Residues 174–183 (VEDMQDDEPL) show a composition bias toward acidic residues. Polar residues predominate over residues 185–198 (NEQNTSRGNISSGL). Serine 190 and serine 404 each carry phosphoserine.

This sequence belongs to the bystin family.

Its subcellular location is the cytoplasm. It localises to the nucleus. The protein localises to the nucleolus. Required for normal export of the pre-40S particles from the nucleus to the cytoplasm. Its subcellular location and association with pre-40S subunit shifts from mixed cytoplasm/nucleus to all nuclear in RPS19 disruptions, suggesting it acts after the ribosomal protein. This chain is Essential nuclear protein 1 (ENP1), found in Saccharomyces cerevisiae (strain ATCC 204508 / S288c) (Baker's yeast).